Consider the following 644-residue polypeptide: Exoribonuclease 2 (644 aa).

In terms of domain architecture, RNB spans 189-516 (REDLTALNFV…NHRLLKAVIT (328 aa)). Residues 561–643 (DIRFNAEIID…ETRGIVAKPA (83 aa)) form the S1 motif domain.

Belongs to the RNR ribonuclease family. RNase II subfamily.

The protein resides in the cytoplasm. It carries out the reaction Exonucleolytic cleavage in the 3'- to 5'-direction to yield nucleoside 5'-phosphates.. Functionally, involved in mRNA degradation. Hydrolyzes single-stranded polyribonucleotides processively in the 3' to 5' direction. The polypeptide is Exoribonuclease 2 (Pectobacterium atrosepticum (strain SCRI 1043 / ATCC BAA-672) (Erwinia carotovora subsp. atroseptica)).